A 253-amino-acid chain; its full sequence is Methionine aminopeptidase (253 aa).

Substrate is bound at residue histidine 78. The a divalent metal cation site is built by aspartate 95, aspartate 106, and histidine 169. Histidine 176 lines the substrate pocket. A divalent metal cation is bound by residues glutamate 206 and glutamate 237.

This sequence belongs to the peptidase M24A family. Methionine aminopeptidase type 1 subfamily. In terms of assembly, monomer. Requires Co(2+) as cofactor. It depends on Zn(2+) as a cofactor. Mn(2+) serves as cofactor. The cofactor is Fe(2+).

It catalyses the reaction Release of N-terminal amino acids, preferentially methionine, from peptides and arylamides.. In terms of biological role, removes the N-terminal methionine from nascent proteins. The N-terminal methionine is often cleaved when the second residue in the primary sequence is small and uncharged (Met-Ala-, Cys, Gly, Pro, Ser, Thr, or Val). Requires deformylation of the N(alpha)-formylated initiator methionine before it can be hydrolyzed. The protein is Methionine aminopeptidase of Helicobacter pylori (strain ATCC 700392 / 26695) (Campylobacter pylori).